The chain runs to 129 residues: Holo-[acyl-carrier-protein] synthase (129 aa).

Residues Asp8 and Glu58 each coordinate Mg(2+).

It belongs to the P-Pant transferase superfamily. AcpS family. The cofactor is Mg(2+).

The protein resides in the cytoplasm. It catalyses the reaction apo-[ACP] + CoA = holo-[ACP] + adenosine 3',5'-bisphosphate + H(+). In terms of biological role, transfers the 4'-phosphopantetheine moiety from coenzyme A to a Ser of acyl-carrier-protein. This is Holo-[acyl-carrier-protein] synthase from Acidithiobacillus ferrooxidans (strain ATCC 53993 / BNL-5-31) (Leptospirillum ferrooxidans (ATCC 53993)).